The chain runs to 431 residues: Glutamate-1-semialdehyde 2,1-aminomutase (431 aa).

N6-(pyridoxal phosphate)lysine is present on Lys-269.

It belongs to the class-III pyridoxal-phosphate-dependent aminotransferase family. HemL subfamily. In terms of assembly, homodimer. The cofactor is pyridoxal 5'-phosphate.

Its subcellular location is the cytoplasm. The enzyme catalyses (S)-4-amino-5-oxopentanoate = 5-aminolevulinate. The protein operates within porphyrin-containing compound metabolism; protoporphyrin-IX biosynthesis; 5-aminolevulinate from L-glutamyl-tRNA(Glu): step 2/2. Its pathway is porphyrin-containing compound metabolism; chlorophyll biosynthesis. The chain is Glutamate-1-semialdehyde 2,1-aminomutase from Chlorobium luteolum (strain DSM 273 / BCRC 81028 / 2530) (Pelodictyon luteolum).